The chain runs to 246 residues: 5-oxoprolinase subunit A (246 aa).

This sequence belongs to the LamB/PxpA family. Forms a complex composed of PxpA, PxpB and PxpC.

It catalyses the reaction 5-oxo-L-proline + ATP + 2 H2O = L-glutamate + ADP + phosphate + H(+). Functionally, catalyzes the cleavage of 5-oxoproline to form L-glutamate coupled to the hydrolysis of ATP to ADP and inorganic phosphate. The chain is 5-oxoprolinase subunit A from Cupriavidus metallidurans (strain ATCC 43123 / DSM 2839 / NBRC 102507 / CH34) (Ralstonia metallidurans).